The chain runs to 300 residues: ATP-dependent (S)-NAD(P)H-hydrate dehydratase (300 aa).

Residues 7–289 (IEARLKSIIP…ESIPSVFDQV (283 aa)) enclose the YjeF C-terminal domain. Residues Gly107 and 160–166 (NVMEYRR) each bind (6S)-NADPHX. ATP contacts are provided by residues 194–198 (KGQVD) and 213–222 (GSPRRCGGQG). Asp223 serves as a coordination point for (6S)-NADPHX.

It belongs to the NnrD/CARKD family. Mg(2+) is required as a cofactor.

It carries out the reaction (6S)-NADHX + ATP = ADP + phosphate + NADH + H(+). The enzyme catalyses (6S)-NADPHX + ATP = ADP + phosphate + NADPH + H(+). Its function is as follows. Catalyzes the dehydration of the S-form of NAD(P)HX at the expense of ATP, which is converted to ADP. Together with NAD(P)HX epimerase, which catalyzes the epimerization of the S- and R-forms, the enzyme allows the repair of both epimers of NAD(P)HX, a damaged form of NAD(P)H that is a result of enzymatic or heat-dependent hydration. This is ATP-dependent (S)-NAD(P)H-hydrate dehydratase from Entamoeba histolytica (strain ATCC 30459 / HM-1:IMSS / ABRM).